The following is a 226-amino-acid chain: tRNA (guanine-N(1)-)-methyltransferase (226 aa).

S-adenosyl-L-methionine-binding positions include G112 and 132–137; that span reads IGDYVL.

Belongs to the RNA methyltransferase TrmD family. Homodimer.

It localises to the cytoplasm. The enzyme catalyses guanosine(37) in tRNA + S-adenosyl-L-methionine = N(1)-methylguanosine(37) in tRNA + S-adenosyl-L-homocysteine + H(+). Functionally, specifically methylates guanosine-37 in various tRNAs. The sequence is that of tRNA (guanine-N(1)-)-methyltransferase from Flavobacterium johnsoniae (strain ATCC 17061 / DSM 2064 / JCM 8514 / BCRC 14874 / CCUG 350202 / NBRC 14942 / NCIMB 11054 / UW101) (Cytophaga johnsonae).